The sequence spans 352 residues: SKP1-like protein 20 (352 aa).

Residues 108-167 (TSAADSLQLKPLVDLTSRALARIIEGKNPEEIREIFHLPDDLTEEEKLEPLKNSMDDPRI) form an interaction with the F-box domain of F-box proteins region. Disordered regions lie at residues 214–251 (KAVK…RSKQ) and 267–288 (LLSA…DIDD). Positions 216 to 230 (VKMSKGKKKKKKKKD) are enriched in basic residues. The span at 239–249 (IHDKESHDLRS) shows a compositional bias: basic and acidic residues.

Belongs to the SKP1 family. Part of a SCF (SKP1-cullin-F-box) protein ligase complex. Expressed in young seedlings, roots, leaves, floral stems, inflorescences, and siliques.

The protein localises to the nucleus. It participates in protein modification; protein ubiquitination. Involved in ubiquitination and subsequent proteasomal degradation of target proteins. Together with CUL1, RBX1 and a F-box protein, it forms a SCF E3 ubiquitin ligase complex. The functional specificity of this complex depends on the type of F-box protein. In the SCF complex, it serves as an adapter that links the F-box protein to CUL1. This is SKP1-like protein 20 (ASK20) from Arabidopsis thaliana (Mouse-ear cress).